The primary structure comprises 319 residues: ATP-dependent 6-phosphofructokinase (319 aa).

Glycine 11 lines the ATP pocket. An ADP-binding site is contributed by 21 to 25 (RAVVR). ATP is bound by residues 72 to 73 (RC) and 102 to 105 (GDGS). Aspartate 103 is a binding site for Mg(2+). 125–127 (TID) is a binding site for substrate. The Proton acceptor role is filled by aspartate 127. Arginine 154 provides a ligand contact to ADP. Residues arginine 162 and 169 to 171 (MGR) each bind substrate. ADP-binding positions include 185 to 187 (GAE), arginine 211, and 213 to 215 (KKH). Substrate-binding positions include glutamate 222, arginine 243, and 249 to 252 (HIQR).

Belongs to the phosphofructokinase type A (PFKA) family. ATP-dependent PFK group I subfamily. Prokaryotic clade 'B1' sub-subfamily. As to quaternary structure, homotetramer. The cofactor is Mg(2+).

It is found in the cytoplasm. It carries out the reaction beta-D-fructose 6-phosphate + ATP = beta-D-fructose 1,6-bisphosphate + ADP + H(+). The protein operates within carbohydrate degradation; glycolysis; D-glyceraldehyde 3-phosphate and glycerone phosphate from D-glucose: step 3/4. Allosterically activated by ADP and other diphosphonucleosides, and allosterically inhibited by phosphoenolpyruvate. In terms of biological role, catalyzes the phosphorylation of D-fructose 6-phosphate to fructose 1,6-bisphosphate by ATP, the first committing step of glycolysis. This is ATP-dependent 6-phosphofructokinase from Bacillus licheniformis (strain ATCC 14580 / DSM 13 / JCM 2505 / CCUG 7422 / NBRC 12200 / NCIMB 9375 / NCTC 10341 / NRRL NRS-1264 / Gibson 46).